The chain runs to 224 residues: Response regulator protein GraR (224 aa).

In terms of domain architecture, Response regulatory spans 2 to 115 (DILLVEDDMT…VLIAKLQAIY (114 aa)). Asp-51 is subject to 4-aspartylphosphate. Positions 126 to 224 (KRVLSWQDAI…KIGKGYMAHG (99 aa)) form a DNA-binding region, ompR/PhoB-type.

In terms of processing, phosphorylated by GraS.

It localises to the cytoplasm. Member of the two-component regulatory system GraR/GraS involved in resistance against cationic antimicrobial peptides (CAMPs). The sequence is that of Response regulator protein GraR (graR) from Staphylococcus saprophyticus subsp. saprophyticus (strain ATCC 15305 / DSM 20229 / NCIMB 8711 / NCTC 7292 / S-41).